The primary structure comprises 366 residues: Chorismate synthase (366 aa).

Residues Arg-48 and Arg-54 each coordinate NADP(+). Residues Arg-125–Ser-127, Asn-237–Ala-238, Gly-277, Lys-292–Ser-296, and Arg-318 contribute to the FMN site.

It belongs to the chorismate synthase family. As to quaternary structure, homotetramer. The cofactor is FMNH2.

It carries out the reaction 5-O-(1-carboxyvinyl)-3-phosphoshikimate = chorismate + phosphate. It functions in the pathway metabolic intermediate biosynthesis; chorismate biosynthesis; chorismate from D-erythrose 4-phosphate and phosphoenolpyruvate: step 7/7. Its function is as follows. Catalyzes the anti-1,4-elimination of the C-3 phosphate and the C-6 proR hydrogen from 5-enolpyruvylshikimate-3-phosphate (EPSP) to yield chorismate, which is the branch point compound that serves as the starting substrate for the three terminal pathways of aromatic amino acid biosynthesis. This reaction introduces a second double bond into the aromatic ring system. The sequence is that of Chorismate synthase from Acidovorax ebreus (strain TPSY) (Diaphorobacter sp. (strain TPSY)).